A 154-amino-acid chain; its full sequence is Superoxide dismutase [Cu-Zn] (154 aa).

Cu cation-binding residues include H47, H49, and H64. The cysteines at positions 58 and 147 are disulfide-linked. Residues H64, H72, H81, and D84 each coordinate Zn(2+). Position 121 (H121) interacts with Cu cation. Position 144 (R144) interacts with substrate.

This sequence belongs to the Cu-Zn superoxide dismutase family. Homodimer. It depends on Cu cation as a cofactor. The cofactor is Zn(2+).

It is found in the cytoplasm. It carries out the reaction 2 superoxide + 2 H(+) = H2O2 + O2. Destroys radicals which are normally produced within the cells and which are toxic to biological systems. The sequence is that of Superoxide dismutase [Cu-Zn] (SOD1) from Podospora anserina (Pleurage anserina).